The chain runs to 135 residues: Fatty acid-binding protein 5 (135 aa).

A2 carries the N-acetylalanine modification. Residue S3 is modified to Phosphoserine. A Nuclear localization signal motif is present at residues K24–K34. The 1-eicosanoylglycerol site is built by C43, T56, and R109. An intrachain disulfide couples C120 to C127. R129 to Y131 contacts 1-eicosanoylglycerol. R129–Y131 is a binding site for (9Z,12Z)-octadecadienoate. Y131 contacts hexadecanoate. Y131 contributes to the N-eicosanoyl ethanolamine binding site. Y131 is modified (phosphotyrosine).

Belongs to the calycin superfamily. Fatty-acid binding protein (FABP) family. As to quaternary structure, monomer. Widely expressed.

The protein localises to the cytoplasm. It is found in the nucleus. It localises to the synapse. The protein resides in the postsynaptic density. Its subcellular location is the secreted. It catalyses the reaction hexadecanoate(out) = hexadecanoate(in). It carries out the reaction (9Z,12Z)-octadecadienoate(out) = (9Z,12Z)-octadecadienoate(in). The enzyme catalyses (9Z)-octadecenoate(out) = (9Z)-octadecenoate(in). Functionally, intracellular carrier for long-chain fatty acids and related active lipids, such as endocannabinoids, that regulate the metabolism and actions of the ligands they bind. In addition to the cytosolic transport, selectively delivers specific fatty acids from the cytosol to the nucleus, wherein they activate nuclear receptors. Delivers retinoic acid to the nuclear receptor peroxisome proliferator-activated receptor delta; which promotes proliferation and survival. May also serve as a synaptic carrier of endocannabinoid at central synapses and thus controls retrograde endocannabinoid signaling. Modulates inflammation by regulating PTGES induction via NF-kappa-B activation, and prostaglandin E2 (PGE2) biosynthesis during inflammation. May be involved in keratinocyte differentiation. In Mus musculus (Mouse), this protein is Fatty acid-binding protein 5.